A 314-amino-acid chain; its full sequence is MIEIEKPRIETIEISEDAKFGKFVVEPLERGYGTTLGNSLRRILLSSLPGAAVKYIEIEGVLHEFSAVDNVVEDVSTIIMNIKQLALKIYSEEDKTLEIDVRDEGEVTASDITHDSDVEILNPELKIATVSKGGHLKIRLVANKGRGYALAEQNNTSDLPIGVIPVDSLYSPVERVNYTVENTRVGQSSDFDKLTLDVWTNGSITPQESVSLAAKIMTEHLNIFVGLTDEAQNAEIMIEKEEDQKEKVLEMSIEELDLSVRSYNCLKRAGINSVQELADKSEADMMKVRNLGRKSLEEVKYKLEDLGLGLRKED.

An alpha N-terminal domain (alpha-NTD) region spans residues 1–228 (MIEIEKPRIE…EHLNIFVGLT (228 aa)). The tract at residues 246 to 314 (EKVLEMSIEE…DLGLGLRKED (69 aa)) is alpha C-terminal domain (alpha-CTD).

The protein belongs to the RNA polymerase alpha chain family. As to quaternary structure, homodimer. The RNAP catalytic core consists of 2 alpha, 1 beta, 1 beta' and 1 omega subunit. When a sigma factor is associated with the core the holoenzyme is formed, which can initiate transcription.

It carries out the reaction RNA(n) + a ribonucleoside 5'-triphosphate = RNA(n+1) + diphosphate. Its function is as follows. DNA-dependent RNA polymerase catalyzes the transcription of DNA into RNA using the four ribonucleoside triphosphates as substrates. The sequence is that of DNA-directed RNA polymerase subunit alpha from Staphylococcus aureus (strain Mu3 / ATCC 700698).